Here is a 302-residue protein sequence, read N- to C-terminus: Short-chain dehydrogenase/reductase 1 (302 aa).

NADP(+) is bound by residues 20–23 (NKGL), R43, 71–72 (DV), and N98. Substrate is bound at residue S170. Residues Y226, K230, and 257–262 (VKTDIN) contribute to the NADP(+) site. Catalysis depends on Y226, which acts as the Proton acceptor.

Belongs to the short-chain dehydrogenases/reductases (SDR) family. Mainly expressed in flowers and flower buds, to a lesser extent in leaves and, at low levels, in stems and roots.

It participates in secondary metabolite biosynthesis; terpenoid biosynthesis. In terms of biological role, component of the oleanane-type triterpene saponins (e.g. saponarioside A and saponarioside B) biosynthetic pathway, leading to the production of natural products with detergent properties used as traditional sources of soap. A dehydrogenase/reductase that, together with UGT74CD1, mediates the conversion of QA-tri to QA-triF; UGT74CD1 may transfer 4-keto-6-deoxy-glucose to QA-tri, which is in turn reduced to D-fucose by SDR1, thus leading to QA-triF formation via the initiation of the C-28 sugar chain. The chain is Short-chain dehydrogenase/reductase 1 from Saponaria officinalis (Common soapwort).